The following is a 281-amino-acid chain: Streptomycin biosynthesis protein StrF (281 aa).

It participates in antibiotic biosynthesis; streptomycin biosynthesis. Its function is as follows. May be involved in the formation of N-methyl-L-glucosamine. In Streptomyces griseus, this protein is Streptomycin biosynthesis protein StrF (strF).